Here is a 569-residue protein sequence, read N- to C-terminus: Phenylalanine ammonia-lyase (569 aa).

Tyr78 serves as the catalytic Proton donor/acceptor. The 5-imidazolinone (Ala-Gly) cross-link spans 167–169; sequence ASG. Ser168 carries the 2,3-didehydroalanine (Ser) modification. Positions 223, 311, 317, 347, 419, 448, and 451 each coordinate (E)-cinnamate.

Belongs to the PAL/histidase family. Homotetramer. Post-translationally, contains an active site 4-methylidene-imidazol-5-one (MIO), which is formed autocatalytically by cyclization and dehydration of residues Ala-Ser-Gly.

It localises to the cytoplasm. The catalysed reaction is L-phenylalanine = (E)-cinnamate + NH4(+). It functions in the pathway phenylpropanoid metabolism; trans-cinnamate biosynthesis; trans-cinnamate from L-phenylalanine: step 1/1. Functionally, catalyzes the non-oxidative deamination of L-phenylalanine to form trans-cinnamic acid, the first step in the phenylpropanoid pathway. In Nostoc punctiforme (strain ATCC 29133 / PCC 73102), this protein is Phenylalanine ammonia-lyase.